The primary structure comprises 256 residues: Proteasome subunit alpha (256 aa).

The disordered stretch occupies residues 226–256; it reads LLPSQEESGSTDGEASGDAGDDKKTGDDKKS. Positions 245 to 256 are enriched in basic and acidic residues; that stretch reads GDDKKTGDDKKS.

This sequence belongs to the peptidase T1A family. The 20S proteasome core is composed of 14 alpha and 14 beta subunits that assemble into four stacked heptameric rings, resulting in a barrel-shaped structure. The two inner rings, each composed of seven catalytic beta subunits, are sandwiched by two outer rings, each composed of seven alpha subunits. The catalytic chamber with the active sites is on the inside of the barrel. Has a gated structure, the ends of the cylinder being occluded by the N-termini of the alpha-subunits. Is capped by the proteasome-associated ATPase, ARC.

The protein resides in the cytoplasm. The protein operates within protein degradation; proteasomal Pup-dependent pathway. Its activity is regulated as follows. The formation of the proteasomal ATPase ARC-20S proteasome complex, likely via the docking of the C-termini of ARC into the intersubunit pockets in the alpha-rings, may trigger opening of the gate for substrate entry. Interconversion between the open-gate and close-gate conformations leads to a dynamic regulation of the 20S proteasome proteolysis activity. Component of the proteasome core, a large protease complex with broad specificity involved in protein degradation. The chain is Proteasome subunit alpha from Saccharopolyspora erythraea (strain ATCC 11635 / DSM 40517 / JCM 4748 / NBRC 13426 / NCIMB 8594 / NRRL 2338).